A 163-amino-acid chain; its full sequence is 2-C-methyl-D-erythritol 2,4-cyclodiphosphate synthase (163 aa).

A divalent metal cation contacts are provided by Asp15 and His17. 4-CDP-2-C-methyl-D-erythritol 2-phosphate contacts are provided by residues 15–17 (DFH) and 41–42 (HS). Residue His49 participates in a divalent metal cation binding. Residues 63-65 (DIG) and 139-142 (TTNE) each bind 4-CDP-2-C-methyl-D-erythritol 2-phosphate.

The protein belongs to the IspF family. As to quaternary structure, homotrimer. The cofactor is a divalent metal cation.

The catalysed reaction is 4-CDP-2-C-methyl-D-erythritol 2-phosphate = 2-C-methyl-D-erythritol 2,4-cyclic diphosphate + CMP. The protein operates within isoprenoid biosynthesis; isopentenyl diphosphate biosynthesis via DXP pathway; isopentenyl diphosphate from 1-deoxy-D-xylulose 5-phosphate: step 4/6. In terms of biological role, involved in the biosynthesis of isopentenyl diphosphate (IPP) and dimethylallyl diphosphate (DMAPP), two major building blocks of isoprenoid compounds. Catalyzes the conversion of 4-diphosphocytidyl-2-C-methyl-D-erythritol 2-phosphate (CDP-ME2P) to 2-C-methyl-D-erythritol 2,4-cyclodiphosphate (ME-CPP) with a corresponding release of cytidine 5-monophosphate (CMP). This is 2-C-methyl-D-erythritol 2,4-cyclodiphosphate synthase from Gloeobacter violaceus (strain ATCC 29082 / PCC 7421).